A 187-amino-acid chain; its full sequence is Probable GTP-binding protein EngB (187 aa).

The EngB-type G domain occupies 18-187 (KNSEIAFWGR…KLKENINSNF (170 aa)). GTP contacts are provided by residues 26-33 (GRSNVGKS), 52-56 (GRTQL), 70-73 (DLPG), 137-140 (TKID), and 168-170 (VSS). Mg(2+) contacts are provided by S33 and T54.

This sequence belongs to the TRAFAC class TrmE-Era-EngA-EngB-Septin-like GTPase superfamily. EngB GTPase family. Mg(2+) serves as cofactor.

Necessary for normal cell division and for the maintenance of normal septation. The chain is Probable GTP-binding protein EngB from Mycoplasmopsis synoviae (strain 53) (Mycoplasma synoviae).